A 156-amino-acid chain; its full sequence is ATP synthase subunit b (156 aa).

A helical membrane pass occupies residues 12–32 (VAFFIFVLFCMKFVWPPVIAA).

Belongs to the ATPase B chain family. In terms of assembly, F-type ATPases have 2 components, F(1) - the catalytic core - and F(0) - the membrane proton channel. F(1) has five subunits: alpha(3), beta(3), gamma(1), delta(1), epsilon(1). F(0) has three main subunits: a(1), b(2) and c(10-14). The alpha and beta chains form an alternating ring which encloses part of the gamma chain. F(1) is attached to F(0) by a central stalk formed by the gamma and epsilon chains, while a peripheral stalk is formed by the delta and b chains.

The protein localises to the cell inner membrane. Functionally, f(1)F(0) ATP synthase produces ATP from ADP in the presence of a proton or sodium gradient. F-type ATPases consist of two structural domains, F(1) containing the extramembraneous catalytic core and F(0) containing the membrane proton channel, linked together by a central stalk and a peripheral stalk. During catalysis, ATP synthesis in the catalytic domain of F(1) is coupled via a rotary mechanism of the central stalk subunits to proton translocation. Component of the F(0) channel, it forms part of the peripheral stalk, linking F(1) to F(0). The sequence is that of ATP synthase subunit b from Pseudomonas syringae pv. syringae (strain B728a).